We begin with the raw amino-acid sequence, 617 residues long: Vacuolar protein sorting-associated protein 33B (617 aa).

This sequence belongs to the STXBP/unc-18/SEC1 family. As to quaternary structure, probable core component of the class C core vacuole/endosome tethering (CORVET) complex. The common core is composed of the class C Vps proteins vps-11, vps-16 and vps-18, and which further associates with vps-8 and vps-33.2. Interacts with spe-39. In terms of tissue distribution, broadly expressed in somatic tissues including the pharynx, intestine, spermatheca, and in coelomocytes. Expressed in the lining of the gut lumen.

It localises to the early endosome. It is found in the late endosome membrane. The protein localises to the lysosome membrane. The protein resides in the cytoplasmic vesicle. Its subcellular location is the clathrin-coated vesicle. It localises to the recycling endosome. Plays a role in vesicle-mediated protein trafficking to lysosomal compartments and in membrane docking/fusion reactions of late endosomes/lysosomes. Believed to act as a component of the putative CORVET endosomal tethering complex which is proposed to be involved in the rab-5-to-rab-7 endosome conversion probably implicating sand-1, and via binding SNAREs and SNARE complexes to mediate tethering and docking events during SNARE-mediated membrane fusion. The CORVET complex is proposed to function as a rab-5 effector to mediate early endosome fusion probably in specific endosome subpopulations. Most likely within the CORVET complex, it is involved in the fusion of endocytic compartments. Required for sperm development and function. This is Vacuolar protein sorting-associated protein 33B from Caenorhabditis elegans.